A 225-amino-acid chain; its full sequence is GrpE protein homolog 2, mitochondrial (225 aa).

Residues 1 to 32 constitute a mitochondrion transit peptide; it reads MAVRSLWAGRLRVQRLLAWSAAWESKGWPLPF. Residue Lys142 is modified to N6-acetyllysine.

Belongs to the GrpE family. Probable component of the PAM complex at least composed of a mitochondrial HSP70 protein, GRPEL1 or GRPEL2, TIMM44, TIMM16/PAM16 and TIMM14/DNAJC19.

Its subcellular location is the mitochondrion matrix. In terms of biological role, essential component of the PAM complex, a complex required for the translocation of transit peptide-containing proteins from the inner membrane into the mitochondrial matrix in an ATP-dependent manner. Seems to control the nucleotide-dependent binding of mitochondrial HSP70 to substrate proteins. Stimulates ATPase activity of mt-HSP70. May also serve to modulate the interconversion of oligomeric (inactive) and monomeric (active) forms of mt-HSP70. The chain is GrpE protein homolog 2, mitochondrial (GRPEL2) from Homo sapiens (Human).